We begin with the raw amino-acid sequence, 409 residues long: L-cysteine:1D-myo-inositol 2-amino-2-deoxy-alpha-D-glucopyranoside ligase (409 aa).

A Zn(2+)-binding site is contributed by Cys-43. L-cysteinyl-5'-AMP-binding positions include 43 to 46 (CGIT), Thr-58, and 81 to 83 (NVT). The 'HIGH' region motif lies at 45 to 55 (ITPYDATHMGH). A 'ERGGDP' region motif is present at residues 183-188 (ERGGDP). Trp-224 lines the L-cysteinyl-5'-AMP pocket. Cys-228 provides a ligand contact to Zn(2+). Position 246-248 (246-248 (GSD)) interacts with L-cysteinyl-5'-AMP. His-253 lines the Zn(2+) pocket. Residue Val-280 participates in L-cysteinyl-5'-AMP binding. A 'KMSKS' region motif is present at residues 286–290 (KMSKS).

This sequence belongs to the class-I aminoacyl-tRNA synthetase family. MshC subfamily. Monomer. Zn(2+) serves as cofactor.

It carries out the reaction 1D-myo-inositol 2-amino-2-deoxy-alpha-D-glucopyranoside + L-cysteine + ATP = 1D-myo-inositol 2-(L-cysteinylamino)-2-deoxy-alpha-D-glucopyranoside + AMP + diphosphate + H(+). Its function is as follows. Catalyzes the ATP-dependent condensation of GlcN-Ins and L-cysteine to form L-Cys-GlcN-Ins. The chain is L-cysteine:1D-myo-inositol 2-amino-2-deoxy-alpha-D-glucopyranoside ligase from Streptomyces scabiei (strain 87.22).